A 182-amino-acid polypeptide reads, in one-letter code: ATP synthase subunit b, chloroplastic (182 aa).

The helical transmembrane segment at 33-55 threads the bilayer; that stretch reads VLNIMLLLFGLIYVLKQFLGSLL.

The protein belongs to the ATPase B chain family. F-type ATPases have 2 components, F(1) - the catalytic core - and F(0) - the membrane proton channel. F(1) has five subunits: alpha(3), beta(3), gamma(1), delta(1), epsilon(1). F(0) has four main subunits: a(1), b(1), b'(1) and c(10-14). The alpha and beta chains form an alternating ring which encloses part of the gamma chain. F(1) is attached to F(0) by a central stalk formed by the gamma and epsilon chains, while a peripheral stalk is formed by the delta, b and b' chains.

It is found in the plastid. It localises to the chloroplast thylakoid membrane. F(1)F(0) ATP synthase produces ATP from ADP in the presence of a proton or sodium gradient. F-type ATPases consist of two structural domains, F(1) containing the extramembraneous catalytic core and F(0) containing the membrane proton channel, linked together by a central stalk and a peripheral stalk. During catalysis, ATP synthesis in the catalytic domain of F(1) is coupled via a rotary mechanism of the central stalk subunits to proton translocation. Its function is as follows. Component of the F(0) channel, it forms part of the peripheral stalk, linking F(1) to F(0). This chain is ATP synthase subunit b, chloroplastic, found in Antithamnion sp. (Red alga).